The chain runs to 65 residues: Small ribosomal subunit protein eS27 (65 aa).

Zn(2+) contacts are provided by cysteine 20, cysteine 23, cysteine 39, and cysteine 42. Residues 20–42 (CIDCGNEQIVFSHPATRVRCNVC) form a C4-type zinc finger.

It belongs to the eukaryotic ribosomal protein eS27 family. In terms of assembly, part of the 30S ribosomal subunit. Zn(2+) serves as cofactor.

The sequence is that of Small ribosomal subunit protein eS27 from Pyrococcus abyssi (strain GE5 / Orsay).